The following is a 160-amino-acid chain: 2-C-methyl-D-erythritol 2,4-cyclodiphosphate synthase (160 aa).

2 residues coordinate a divalent metal cation: Asp9 and His11. 4-CDP-2-C-methyl-D-erythritol 2-phosphate is bound by residues 9–11 (DVH) and 35–36 (HS). An a divalent metal cation-binding site is contributed by His43. Residues 57-59 (DIG), 62-66 (FPDTD), 133-136 (TTTE), Phe140, and Arg143 contribute to the 4-CDP-2-C-methyl-D-erythritol 2-phosphate site.

This sequence belongs to the IspF family. Homotrimer. A divalent metal cation is required as a cofactor.

The enzyme catalyses 4-CDP-2-C-methyl-D-erythritol 2-phosphate = 2-C-methyl-D-erythritol 2,4-cyclic diphosphate + CMP. The protein operates within isoprenoid biosynthesis; isopentenyl diphosphate biosynthesis via DXP pathway; isopentenyl diphosphate from 1-deoxy-D-xylulose 5-phosphate: step 4/6. Involved in the biosynthesis of isopentenyl diphosphate (IPP) and dimethylallyl diphosphate (DMAPP), two major building blocks of isoprenoid compounds. Catalyzes the conversion of 4-diphosphocytidyl-2-C-methyl-D-erythritol 2-phosphate (CDP-ME2P) to 2-C-methyl-D-erythritol 2,4-cyclodiphosphate (ME-CPP) with a corresponding release of cytidine 5-monophosphate (CMP). The sequence is that of 2-C-methyl-D-erythritol 2,4-cyclodiphosphate synthase from Haemophilus ducreyi (strain 35000HP / ATCC 700724).